A 748-amino-acid chain; its full sequence is Transcription factor FBD3 (748 aa).

Residues 1–10 (MPEQPRRPSD) are compositionally biased toward basic and acidic residues. A disordered region spans residues 1–26 (MPEQPRRPSDQEQNQSETGPPTNKRR). A compositionally biased stretch (polar residues) spans 11–21 (QEQNQSETGPP). Positions 32-59 (CNACRSRKSRCDGQRPSCSSCLSLGFDC) form a DNA-binding region, zn(2)-C6 fungal-type. Disordered stretches follow at residues 116–160 (GTIN…EGIP) and 417–438 (IPDE…TSGN). A compositionally biased stretch (low complexity) spans 131–141 (APTKASAPSGA). A compositionally biased stretch (polar residues) spans 429–438 (SGRSPATSGN).

The protein localises to the nucleus. In terms of biological role, transcription factor; part of the Fusarium detoxification of benzoxazolinone cluster 2 (FDB2) involved in the degradation of benzoxazolinones produced by the host plant. Maize, wheat, and rye produce the 2 benzoxazinone phytoanticipins 2,4-dihy-droxy-7-methoxy-1,4-benzoxazin-3-one (DIMBOA) and 2,4-dihydroxy-1,4-benzoxazin-3-one (DIBOA) that, due to their inherent instability once released, spontaneously degrade to the more stable corresponding benzoxazolinones, 6-methoxy-2-benzoxazolinone (MBOA) and 2-benzoxazolinone (BOA), respectively. FDB3 is not essentiel, but contributes to efficient BOA biotransformation. The sequence is that of Transcription factor FBD3 from Gibberella moniliformis (strain M3125 / FGSC 7600) (Maize ear and stalk rot fungus).